The primary structure comprises 345 residues: NADH-ubiquinone oxidoreductase chain 2 (345 aa).

The next 10 membrane-spanning stretches (helical) occupy residues 3 to 23 (PYIL…TFAS), 25 to 45 (NWLL…PLMA), 59 to 79 (YFIT…INAW), 95 to 115 (ALMT…FWLP), 148 to 168 (LMPE…GWGG), 177 to 196 (IMAY…MHFM), 201 to 223 (IINL…TLNS), 236 to 256 (FPAL…LPPL), 273 to 293 (NLAL…YFYL), and 322 to 342 (FILP…PSII).

The protein belongs to the complex I subunit 2 family.

Its subcellular location is the mitochondrion inner membrane. The enzyme catalyses a ubiquinone + NADH + 5 H(+)(in) = a ubiquinol + NAD(+) + 4 H(+)(out). Core subunit of the mitochondrial membrane respiratory chain NADH dehydrogenase (Complex I) that is believed to belong to the minimal assembly required for catalysis. Complex I functions in the transfer of electrons from NADH to the respiratory chain. The immediate electron acceptor for the enzyme is believed to be ubiquinone. The sequence is that of NADH-ubiquinone oxidoreductase chain 2 (MT-ND2) from Polypterus ornatipinnis (Ornate bichir).